The primary structure comprises 388 residues: Chorismate synthase (388 aa).

The NADP(+) site is built by Arg-39 and Arg-45. Residues Arg-132–Ser-134, Asn-251–Ala-252, Gly-296, Lys-311–Thr-315, and Arg-337 contribute to the FMN site.

It belongs to the chorismate synthase family. In terms of assembly, homotetramer. The cofactor is FMNH2.

The catalysed reaction is 5-O-(1-carboxyvinyl)-3-phosphoshikimate = chorismate + phosphate. Its pathway is metabolic intermediate biosynthesis; chorismate biosynthesis; chorismate from D-erythrose 4-phosphate and phosphoenolpyruvate: step 7/7. In terms of biological role, catalyzes the anti-1,4-elimination of the C-3 phosphate and the C-6 proR hydrogen from 5-enolpyruvylshikimate-3-phosphate (EPSP) to yield chorismate, which is the branch point compound that serves as the starting substrate for the three terminal pathways of aromatic amino acid biosynthesis. This reaction introduces a second double bond into the aromatic ring system. The sequence is that of Chorismate synthase from Staphylococcus carnosus (strain TM300).